The sequence spans 361 residues: Peptide chain release factor 1 (361 aa).

Glutamine 235 carries the N5-methylglutamine modification. The interval 283–306 is disordered; it reads RSQQATAEAMTRKLQVGSGDRSQR.

It belongs to the prokaryotic/mitochondrial release factor family. Methylated by PrmC. Methylation increases the termination efficiency of RF1.

It is found in the cytoplasm. Functionally, peptide chain release factor 1 directs the termination of translation in response to the peptide chain termination codons UAG and UAA. The polypeptide is Peptide chain release factor 1 (Xylella fastidiosa (strain M23)).